The sequence spans 127 residues: Holo-[acyl-carrier-protein] synthase (127 aa).

Residues Asp-8 and Glu-60 each coordinate Mg(2+).

Belongs to the P-Pant transferase superfamily. AcpS family. It depends on Mg(2+) as a cofactor.

It is found in the cytoplasm. It carries out the reaction apo-[ACP] + CoA = holo-[ACP] + adenosine 3',5'-bisphosphate + H(+). In terms of biological role, transfers the 4'-phosphopantetheine moiety from coenzyme A to a Ser of acyl-carrier-protein. The protein is Holo-[acyl-carrier-protein] synthase of Marinomonas sp. (strain MWYL1).